We begin with the raw amino-acid sequence, 194 residues long: Xanthine phosphoribosyltransferase (194 aa).

L20 and N27 together coordinate xanthine. 128–132 is a 5-phospho-alpha-D-ribose 1-diphosphate binding site; that stretch reads ANGQA. K156 contributes to the xanthine binding site.

The protein belongs to the purine/pyrimidine phosphoribosyltransferase family. Xpt subfamily. Homodimer.

It is found in the cytoplasm. It carries out the reaction XMP + diphosphate = xanthine + 5-phospho-alpha-D-ribose 1-diphosphate. It functions in the pathway purine metabolism; XMP biosynthesis via salvage pathway; XMP from xanthine: step 1/1. Its function is as follows. Converts the preformed base xanthine, a product of nucleic acid breakdown, to xanthosine 5'-monophosphate (XMP), so that it can be reused for RNA or DNA synthesis. The chain is Xanthine phosphoribosyltransferase (xpt) from Bacillus subtilis (strain 168).